Reading from the N-terminus, the 917-residue chain is Isoleucine--tRNA ligase (917 aa).

The L-isoleucyl-5'-AMP site is built by P56, H67, E554, G555, D557, Q558, and H585. Residues 57-67 (PYANGNLHMGH) carry the 'HIGH' region motif. A 'KMSKS' region motif is present at residues 595 to 599 (KMSKS). An ATP-binding site is contributed by K598. TRNA(Ile)-binding residues include R632 and Q640. Zn(2+)-binding residues include C886, C889, C906, and C909.

It belongs to the class-I aminoacyl-tRNA synthetase family. IleS type 1 subfamily. In terms of assembly, monomer. Zn(2+) is required as a cofactor.

It is found in the cytoplasm. The catalysed reaction is tRNA(Ile) + L-isoleucine + ATP = L-isoleucyl-tRNA(Ile) + AMP + diphosphate. In terms of biological role, catalyzes the attachment of isoleucine to tRNA(Ile). As IleRS can inadvertently accommodate and process structurally similar amino acids such as valine, to avoid such errors it has two additional distinct tRNA(Ile)-dependent editing activities. One activity is designated as 'pretransfer' editing and involves the hydrolysis of activated Val-AMP. The other activity is designated 'posttransfer' editing and involves deacylation of mischarged Val-tRNA(Ile). The sequence is that of Isoleucine--tRNA ligase (ileS) from Staphylococcus aureus.